Reading from the N-terminus, the 251-residue chain is Pyrroloquinoline-quinone synthase (251 aa).

This sequence belongs to the PqqC family.

It catalyses the reaction 6-(2-amino-2-carboxyethyl)-7,8-dioxo-1,2,3,4,7,8-hexahydroquinoline-2,4-dicarboxylate + 3 O2 = pyrroloquinoline quinone + 2 H2O2 + 2 H2O + H(+). It functions in the pathway cofactor biosynthesis; pyrroloquinoline quinone biosynthesis. Ring cyclization and eight-electron oxidation of 3a-(2-amino-2-carboxyethyl)-4,5-dioxo-4,5,6,7,8,9-hexahydroquinoline-7,9-dicarboxylic-acid to PQQ. This Pseudomonas syringae pv. tomato (strain ATCC BAA-871 / DC3000) protein is Pyrroloquinoline-quinone synthase.